The following is a 210-amino-acid chain: DNA replication complex GINS protein PSF3 (210 aa).

Belongs to the GINS3/PSF3 family. Component of the GINS complex which is a heterotetramer of gins1/psf1, gins2/psf2, gins3/psf3 and gins4/sld5. Component of the CMG helicase complex, composed of the mcm2-7 complex, the GINS complex and cdc45.

The protein resides in the nucleus. It localises to the chromosome. In terms of biological role, required for correct functioning of the GINS complex, a complex that plays an essential role in the initiation of DNA replication, and progression of DNA replication forks. GINS complex is a core component of CDC45-MCM-GINS (CMG) helicase, the molecular machine that unwinds template DNA during replication, and around which the replisome is built. In Xenopus laevis (African clawed frog), this protein is DNA replication complex GINS protein PSF3.